The sequence spans 184 residues: MKNVTDSFVSLGHWPSAGSFGFNTDILATNPINLSVVLGVLIFFGKGVLSDLLDNRKQRILNTIRNSEELRGGAIEQLEKARSRLRKVESEAEQFRVNGYSEIEREKLNLINSTYKTLEQLENYKNETIQFEQQRAINQVRQRVFQQALRGALGTLNSCLNNELHLRTISANIGMLGTMKEITD.

Residues 27 to 49 form a helical membrane-spanning segment; sequence LATNPINLSVVLGVLIFFGKGVL.

This sequence belongs to the ATPase B chain family. F-type ATPases have 2 components, F(1) - the catalytic core - and F(0) - the membrane proton channel. F(1) has five subunits: alpha(3), beta(3), gamma(1), delta(1), epsilon(1). F(0) has four main subunits: a(1), b(1), b'(1) and c(10-14). The alpha and beta chains form an alternating ring which encloses part of the gamma chain. F(1) is attached to F(0) by a central stalk formed by the gamma and epsilon chains, while a peripheral stalk is formed by the delta, b and b' chains.

It localises to the plastid. The protein resides in the chloroplast thylakoid membrane. In terms of biological role, f(1)F(0) ATP synthase produces ATP from ADP in the presence of a proton or sodium gradient. F-type ATPases consist of two structural domains, F(1) containing the extramembraneous catalytic core and F(0) containing the membrane proton channel, linked together by a central stalk and a peripheral stalk. During catalysis, ATP synthesis in the catalytic domain of F(1) is coupled via a rotary mechanism of the central stalk subunits to proton translocation. Its function is as follows. Component of the F(0) channel, it forms part of the peripheral stalk, linking F(1) to F(0). The protein is ATP synthase subunit b, chloroplastic of Nicotiana sylvestris (Wood tobacco).